The following is a 304-amino-acid chain: Taste receptor type 2 member 4 (304 aa).

Residues methionine 1–phenylalanine 10 lie on the Extracellular side of the membrane. The helical transmembrane segment at alanine 11–isoleucine 31 threads the bilayer. Over serine 32 to lysine 46 the chain is Cytoplasmic. The helical transmembrane segment at isoleucine 47–valine 67 threads the bilayer. Residues tyrosine 68–serine 80 are Extracellular-facing. A helical membrane pass occupies residues threonine 81–leucine 101. The Cytoplasmic portion of the chain corresponds to asparagine 102–threonine 128. Residues threonine 129–leucine 149 form a helical membrane-spanning segment. Residues threonine 150 to aspartate 171 lie on the Extracellular side of the membrane. A glycan (N-linked (GlcNAc...) asparagine) is linked at asparagine 163. A helical membrane pass occupies residues glycine 172–valine 192. Over threonine 193–arginine 229 the chain is Cytoplasmic. Residues leucine 230–proline 250 traverse the membrane as a helical segment. Residues serine 251–glutamine 260 lie on the Extracellular side of the membrane. The helical transmembrane segment at alanine 261–threonine 281 threads the bilayer. At histidine 282 to asparagine 304 the chain is on the cytoplasmic side.

The protein belongs to the G-protein coupled receptor T2R family. As to expression, expressed in tongue, stomach and duodenum.

The protein localises to the membrane. Its subcellular location is the cell projection. The protein resides in the cilium membrane. Gustducin-coupled receptor implicated in the perception of bitter compounds in the oral cavity and the gastrointestinal tract. Signals through PLCB2 and the calcium-regulated cation channel TRPM5. In airway epithelial cells, binding of denatonium increases the intracellular calcium ion concentration and stimulates ciliary beat frequency. This chain is Taste receptor type 2 member 4, found in Rattus norvegicus (Rat).